The sequence spans 33 residues: Photosystem II reaction center protein T (33 aa).

A helical membrane pass occupies residues 3 to 23; sequence ALVYTFLLVSTLGIIFFAIFF.

The protein belongs to the PsbT family. In terms of assembly, PSII is composed of 1 copy each of membrane proteins PsbA, PsbB, PsbC, PsbD, PsbE, PsbF, PsbH, PsbI, PsbJ, PsbK, PsbL, PsbM, PsbT, PsbY, PsbZ, Psb30/Ycf12, at least 3 peripheral proteins of the oxygen-evolving complex and a large number of cofactors. It forms dimeric complexes.

The protein resides in the plastid. Its subcellular location is the chloroplast thylakoid membrane. Found at the monomer-monomer interface of the photosystem II (PS II) dimer, plays a role in assembly and dimerization of PSII. PSII is a light-driven water plastoquinone oxidoreductase, using light energy to abstract electrons from H(2)O, generating a proton gradient subsequently used for ATP formation. This Asparagus officinalis (Garden asparagus) protein is Photosystem II reaction center protein T.